We begin with the raw amino-acid sequence, 276 residues long: Small ribosomal subunit protein uS2 (276 aa).

The protein belongs to the universal ribosomal protein uS2 family.

This is Small ribosomal subunit protein uS2 from Chlamydia caviae (strain ATCC VR-813 / DSM 19441 / 03DC25 / GPIC) (Chlamydophila caviae).